A 275-amino-acid chain; its full sequence is Exosome complex component Rrp42 (275 aa).

This sequence belongs to the RNase PH family. Rrp42 subfamily. As to quaternary structure, component of the archaeal exosome complex. Forms a hexameric ring-like arrangement composed of 3 Rrp41-Rrp42 heterodimers. The hexameric ring associates with a trimer of Rrp4 and/or Csl4 subunits.

It is found in the cytoplasm. Its function is as follows. Non-catalytic component of the exosome, which is a complex involved in RNA degradation. Contributes to the structuring of the Rrp41 active site. This is Exosome complex component Rrp42 from Saccharolobus islandicus (strain L.S.2.15 / Lassen #1) (Sulfolobus islandicus).